A 539-amino-acid polypeptide reads, in one-letter code: Alpha-aminoadipic semialdehyde dehydrogenase (539 aa).

Residues 1–26 (MWRVPRRLCVQSVKTSKLSGPWSRPA) constitute a mitochondrion transit peptide. N6-acetyllysine; alternate occurs at positions 86, 94, and 97. N6-succinyllysine; alternate is present on residues Lys-86, Lys-94, and Lys-97. NAD(+) contacts are provided by residues 192–194 (TAF), Lys-218, 258–259 (GT), 274–275 (GS), 274–279 (GSTQVG), and 296–297 (EL). The active-site Proton acceptor is the Glu-296. Cys-330 acts as the Nucleophile in catalysis. A (S)-2-amino-6-oxohexanoate-binding site is contributed by Thr-331. Position 427 (Glu-427) interacts with NAD(+). Lys-462 is subject to N6-acetyllysine. (S)-2-amino-6-oxohexanoate is bound by residues Gly-489 and Ala-490. The residue at position 500 (Lys-500) is an N6-acetyllysine. An N6-succinyllysine modification is found at Lys-537.

This sequence belongs to the aldehyde dehydrogenase family. Homotetramer. In terms of tissue distribution, present in liver, kidney, brain and pancreas, and at lower levels in jejunum, duodenum, stomach and testes (at protein level).

It is found in the cytoplasm. It localises to the cytosol. The protein localises to the nucleus. The protein resides in the mitochondrion. The catalysed reaction is nonanal + NAD(+) + H2O = nonanoate + NADH + 2 H(+). It carries out the reaction (S)-2-amino-6-oxohexanoate + NAD(+) + H2O = L-2-aminoadipate + NADH + 2 H(+). It catalyses the reaction betaine aldehyde + NAD(+) + H2O = glycine betaine + NADH + 2 H(+). The enzyme catalyses an aldehyde + NAD(+) + H2O = a carboxylate + NADH + 2 H(+). The catalysed reaction is hexanal + NAD(+) + H2O = hexanoate + NADH + 2 H(+). It carries out the reaction octanal + NAD(+) + H2O = octanoate + NADH + 2 H(+). It catalyses the reaction (E)-non-2-enal + NAD(+) + H2O = (E)-non-2-enoate + NADH + 2 H(+). The enzyme catalyses (E)-4-hydroxynon-2-enal + NAD(+) + H2O = (E)-4-hydroxynon-2-enoate + NADH + 2 H(+). Its pathway is amine and polyamine biosynthesis; betaine biosynthesis via choline pathway; betaine from betaine aldehyde: step 1/1. Multifunctional enzyme mediating important protective effects. Metabolizes betaine aldehyde to betaine, an important cellular osmolyte and methyl donor. Protects cells from oxidative stress by metabolizing a number of lipid peroxidation-derived aldehydes. Involved in lysine catabolism. The sequence is that of Alpha-aminoadipic semialdehyde dehydrogenase from Mus musculus (Mouse).